We begin with the raw amino-acid sequence, 417 residues long: NADH-quinone oxidoreductase subunit D (417 aa).

Belongs to the complex I 49 kDa subunit family. In terms of assembly, NDH-1 is composed of 14 different subunits. Subunits NuoB, C, D, E, F, and G constitute the peripheral sector of the complex.

The protein resides in the cell inner membrane. It carries out the reaction a quinone + NADH + 5 H(+)(in) = a quinol + NAD(+) + 4 H(+)(out). In terms of biological role, NDH-1 shuttles electrons from NADH, via FMN and iron-sulfur (Fe-S) centers, to quinones in the respiratory chain. The immediate electron acceptor for the enzyme in this species is believed to be ubiquinone. Couples the redox reaction to proton translocation (for every two electrons transferred, four hydrogen ions are translocated across the cytoplasmic membrane), and thus conserves the redox energy in a proton gradient. The polypeptide is NADH-quinone oxidoreductase subunit D (Methylobacillus flagellatus (strain ATCC 51484 / DSM 6875 / VKM B-1610 / KT)).